Reading from the N-terminus, the 219-residue chain is Endonuclease III (219 aa).

Positions 117–136 (MEELLTLPGVARKTANVVLA) constitute a HhH domain. [4Fe-4S] cluster is bound by residues C197, C204, C207, and C213.

Belongs to the Nth/MutY family. Requires [4Fe-4S] cluster as cofactor.

The enzyme catalyses 2'-deoxyribonucleotide-(2'-deoxyribose 5'-phosphate)-2'-deoxyribonucleotide-DNA = a 3'-end 2'-deoxyribonucleotide-(2,3-dehydro-2,3-deoxyribose 5'-phosphate)-DNA + a 5'-end 5'-phospho-2'-deoxyribonucleoside-DNA + H(+). Its function is as follows. DNA repair enzyme that has both DNA N-glycosylase activity and AP-lyase activity. The DNA N-glycosylase activity releases various damaged pyrimidines from DNA by cleaving the N-glycosidic bond, leaving an AP (apurinic/apyrimidinic) site. The AP-lyase activity cleaves the phosphodiester bond 3' to the AP site by a beta-elimination, leaving a 3'-terminal unsaturated sugar and a product with a terminal 5'-phosphate. The protein is Endonuclease III of Synechocystis sp. (strain ATCC 27184 / PCC 6803 / Kazusa).